We begin with the raw amino-acid sequence, 305 residues long: 2-oxoacid:ferredoxin oxidoreductase subunit beta (305 aa).

Cysteine 12, cysteine 15, and cysteine 46 together coordinate [4Fe-4S] cluster. Thiamine diphosphate is bound by residues isoleucine 44–serine 47 and histidine 65. Residue aspartate 90 coordinates Mg(2+). Glycine 91–aspartate 92 contributes to the thiamine diphosphate binding site. Asparagine 118 and valine 120 together coordinate Mg(2+). Glycine 122–leucine 123 contacts thiamine diphosphate. Cysteine 197 is a binding site for [4Fe-4S] cluster.

Heterodimer composed of an alpha and a beta subunit. It depends on [4Fe-4S] cluster as a cofactor. Thiamine diphosphate is required as a cofactor. Requires Mg(2+) as cofactor.

The enzyme catalyses a 2-oxocarboxylate + 2 oxidized [2Fe-2S]-[ferredoxin] + CoA = an acyl-CoA + 2 reduced [2Fe-2S]-[ferredoxin] + CO2 + H(+). In terms of biological role, catalyzes the coenzyme A-dependent oxidative decarboxylation of different 2-oxoacids such as 2-oxoglutarate, pyruvate and 2-oxobutyrate to form their CoA derivatives. This chain is 2-oxoacid:ferredoxin oxidoreductase subunit beta, found in Saccharolobus solfataricus (Sulfolobus solfataricus).